The sequence spans 256 residues: tRNA (guanine-N(1)-)-methyltransferase (256 aa).

Residues glycine 119 and 139–144 (IGDYVV) each bind S-adenosyl-L-methionine.

Belongs to the RNA methyltransferase TrmD family. As to quaternary structure, homodimer.

It localises to the cytoplasm. The catalysed reaction is guanosine(37) in tRNA + S-adenosyl-L-methionine = N(1)-methylguanosine(37) in tRNA + S-adenosyl-L-homocysteine + H(+). Functionally, specifically methylates guanosine-37 in various tRNAs. The polypeptide is tRNA (guanine-N(1)-)-methyltransferase (Nitrosospira multiformis (strain ATCC 25196 / NCIMB 11849 / C 71)).